Reading from the N-terminus, the 269-residue chain is Staphylococcal secretory antigen ssaA2 (269 aa).

A signal peptide spans 1–27 (MKKIATATIATAGFATIAIASGNQAHA). Tandem repeats lie at residues 83–85 (YNN), 88–90 (YNN), 91–93 (YNN), 97–99 (YNN), 103–105 (YNN), 106–108 (YSN), and 115–117 (YNN). The interval 83 to 115 (YNNYSYNNYNNGYSYNNYSRYNNYSNNNQSYNY) is 7 X 3 AA repeats of Y-[NS]-N. In terms of domain architecture, Peptidase C51 spans 148 to 269 (MAPSSNGRSI…SQAAGYNFIH (122 aa)).

Its subcellular location is the secreted. Not known; immunogenic protein. The protein is Staphylococcal secretory antigen ssaA2 (ssaA2) of Staphylococcus aureus (strain MRSA252).